A 338-amino-acid polypeptide reads, in one-letter code: S-adenosylmethionine:tRNA ribosyltransferase-isomerase (338 aa).

Belongs to the QueA family. Monomer.

Its subcellular location is the cytoplasm. The enzyme catalyses 7-aminomethyl-7-carbaguanosine(34) in tRNA + S-adenosyl-L-methionine = epoxyqueuosine(34) in tRNA + adenine + L-methionine + 2 H(+). It participates in tRNA modification; tRNA-queuosine biosynthesis. Functionally, transfers and isomerizes the ribose moiety from AdoMet to the 7-aminomethyl group of 7-deazaguanine (preQ1-tRNA) to give epoxyqueuosine (oQ-tRNA). This is S-adenosylmethionine:tRNA ribosyltransferase-isomerase from Francisella tularensis subsp. tularensis (strain WY96-3418).